Consider the following 519-residue polypeptide: Sugar transport protein MST5 (519 aa).

Topologically, residues 1–18 (MAGGAMVQTVGGKTYPGK) are cytoplasmic. Residues 19–39 (MTAFVFFTCLVASSGGLIFGY) form a helical membrane-spanning segment. Residues 40–80 (DIGISGGVTSMDSFLSEFFPSVYAQAKASKDTNQYCKFDSQ) lie on the Extracellular side of the membrane. Residues 81–101 (LLTLFTSSLYLAALATSFVAA) form a helical membrane-spanning segment. At 102–110 (WVTRVFGRK) the chain is on the cytoplasmic side. Residues 111–127 (WSMFCGGVTFLAGSALN) traverse the membrane as a helical segment. Gly128 is a topological domain (extracellular). The chain crosses the membrane as a helical span at residues 129–149 (AATDVMMLILGRILLGIGVGF). Residues 150-167 (ANQSVPLYLSEMAPANLR) are Cytoplasmic-facing. The helical transmembrane segment at 168-188 (GMLNIGFQLMTTIGILSANLI) threads the bilayer. Over 189 to 202 (NYATSSIEGGWGWR) the chain is Extracellular. A helical membrane pass occupies residues 203–223 (IGLGLAGVPALIITLGALVLP). Topologically, residues 224–295 (DTPNSLIARG…IAILIPCFQQ (72 aa)) are cytoplasmic. A helical membrane pass occupies residues 296 to 316 (LTGINVIMFYAPVLFLTIGFA). At 317–321 (GDASL) the chain is on the extracellular side. The helical transmembrane segment at 322–342 (MSAVITGLVNMFATVVSIISV) threads the bilayer. Over 343 to 357 (DRLGRRVLFLQGGTQ) the chain is Cytoplasmic. The helical transmembrane segment at 358–378 (MFISQVVVGTLIALQFGVAGV) threads the bilayer. Topologically, residues 379–386 (GEMSRSYA) are extracellular. Residues 387-407 (ILLVLFICMYVAGFAWSWGPL) form a helical membrane-spanning segment. Topologically, residues 408 to 426 (GWLVPSEVFALEIRSAGQS) are cytoplasmic. The helical transmembrane segment at 427-447 (IAVCVNMMLTFVIGQAFLTML) threads the bilayer. Over 448 to 451 (CHLK) the chain is Extracellular. The chain crosses the membrane as a helical span at residues 452-472 (FGLFYFFAGWMLVMTTFVALF). At 473–519 (LPETKGVPIEEMNHVWSRHWFWGSYVTAHDVAGAGAGGGGNRRSHNV) the chain is on the cytoplasmic side.

It belongs to the major facilitator superfamily. Sugar transporter (TC 2.A.1.1) family. In terms of tissue distribution, expressed in panicles before heading. Expressed in flowers before pollination.

The protein resides in the membrane. Mediates active uptake of hexoses by sugar:proton symport. Can transport glucose, xylose and 3-O-methylglucose. May play a role at the early stage of seed development. In Oryza sativa subsp. japonica (Rice), this protein is Sugar transport protein MST5.